Reading from the N-terminus, the 586-residue chain is 2-succinyl-5-enolpyruvyl-6-hydroxy-3-cyclohexene-1-carboxylate synthase (586 aa).

Belongs to the TPP enzyme family. MenD subfamily. Homodimer. Mg(2+) serves as cofactor. The cofactor is Mn(2+). It depends on thiamine diphosphate as a cofactor.

The catalysed reaction is isochorismate + 2-oxoglutarate + H(+) = 5-enolpyruvoyl-6-hydroxy-2-succinyl-cyclohex-3-ene-1-carboxylate + CO2. Its pathway is quinol/quinone metabolism; 1,4-dihydroxy-2-naphthoate biosynthesis; 1,4-dihydroxy-2-naphthoate from chorismate: step 2/7. The protein operates within quinol/quinone metabolism; menaquinone biosynthesis. Catalyzes the thiamine diphosphate-dependent decarboxylation of 2-oxoglutarate and the subsequent addition of the resulting succinic semialdehyde-thiamine pyrophosphate anion to isochorismate to yield 2-succinyl-5-enolpyruvyl-6-hydroxy-3-cyclohexene-1-carboxylate (SEPHCHC). The sequence is that of 2-succinyl-5-enolpyruvyl-6-hydroxy-3-cyclohexene-1-carboxylate synthase from Natronomonas pharaonis (strain ATCC 35678 / DSM 2160 / CIP 103997 / JCM 8858 / NBRC 14720 / NCIMB 2260 / Gabara) (Halobacterium pharaonis).